A 252-amino-acid chain; its full sequence is Neurexophilin-3 (252 aa).

Residues 1-22 form the signal peptide; sequence MQLTRCCFVFLVQGSLYLVICG. The II stretch occupies residues 23–75; the sequence is QDDGPPGSEDPERDDHEGQPRPRVPRKRGHISPKSRPMANSTLLGLLAPPGEA. The interval 27-58 is disordered; that stretch reads PPGSEDPERDDHEGQPRPRVPRKRGHISPKSR. Residues 45–55 show a composition bias toward basic residues; that stretch reads RVPRKRGHISP. Residues Asn62, Asn127, Asn137, and Asn143 are each glycosylated (N-linked (GlcNAc...) asparagine). The interval 76–157 is III; that stretch reads WGILGQPPNR…LVPPSKAVEF (82 aa). Positions 158 to 166 are IV (linker domain); it reads HQEQQIFIE. Residues 167-252 are v (Cys-rich); it reads AKASKIFNCR…HSDTPYYPSG (86 aa).

This sequence belongs to the neurexophilin family. Post-translationally, may be proteolytically processed at the boundary between the N-terminal non-conserved and the central conserved domain in neuron-like cells. Highest level in brain.

The protein localises to the secreted. Its function is as follows. May be signaling molecules that resemble neuropeptides. Ligand for alpha-neurexins. The chain is Neurexophilin-3 (NXPH3) from Homo sapiens (Human).